The primary structure comprises 506 residues: Sugar transport protein 5 (506 aa).

Over 1–19 (MAGGGLALDVSSAGNIDAK) the chain is Cytoplasmic. 12 helical membrane-spanning segments follow: residues 20-40 (ITAA…IFGY), 81-101 (LLTA…LVAS), 117-137 (GFTF…AMLI), 141-161 (ILLG…LSEV), 168-188 (GAFN…ANLI), 201-221 (ISLG…LFIS), 287-307 (LVVA…VNAF), 325-345 (IATF…TMVI), 352-372 (FLFI…AVLL), 390-410 (VTVV…WGPL), 430-450 (LSVA…LATL), and 456-476 (GAFL…IMFL). At 477 to 506 (PETKGIPVDSMYQVWEKHWYWQRFTKPTST) the chain is on the cytoplasmic side.

Belongs to the major facilitator superfamily. Sugar transporter (TC 2.A.1.1) family.

The protein localises to the membrane. Its function is as follows. Mediates an active uptake of hexoses, probably by sugar/hydrogen symport. This chain is Sugar transport protein 5 (STP5), found in Arabidopsis thaliana (Mouse-ear cress).